The sequence spans 119 residues: Large ribosomal subunit protein uL22 (119 aa).

This sequence belongs to the universal ribosomal protein uL22 family. In terms of assembly, part of the 50S ribosomal subunit.

This protein binds specifically to 23S rRNA; its binding is stimulated by other ribosomal proteins, e.g. L4, L17, and L20. It is important during the early stages of 50S assembly. It makes multiple contacts with different domains of the 23S rRNA in the assembled 50S subunit and ribosome. In terms of biological role, the globular domain of the protein is located near the polypeptide exit tunnel on the outside of the subunit, while an extended beta-hairpin is found that lines the wall of the exit tunnel in the center of the 70S ribosome. This chain is Large ribosomal subunit protein uL22, found in Bifidobacterium animalis subsp. lactis (strain AD011).